A 723-amino-acid chain; its full sequence is ATP-dependent zinc metalloprotease YME1 homolog (723 aa).

The chain crosses the membrane as a helical span at residues 198–220 (LTRFYIFLVFCIFFGYLTGRIRV). Position 288–295 (288–295 (GPPGTGKT)) interacts with ATP. His509 contributes to the Zn(2+) binding site. Glu510 is an active-site residue. His513 and Asp587 together coordinate Zn(2+).

It in the N-terminal section; belongs to the AAA ATPase family. The protein in the C-terminal section; belongs to the peptidase M41 family. The cofactor is Zn(2+).

It localises to the mitochondrion inner membrane. It is found in the mitochondrion. ATP-dependent metalloprotease that catalyzes the degradation of folded and unfolded proteins with a suitable degron sequence in the mitochondrial intermembrane region. Plays an important role in regulating mitochondrial morphology and function. The protein is ATP-dependent zinc metalloprotease YME1 homolog (ymel-1) of Caenorhabditis elegans.